The sequence spans 303 residues: Recombination-associated protein RdgC (303 aa).

It belongs to the RdgC family.

The protein localises to the cytoplasm. It localises to the nucleoid. In terms of biological role, may be involved in recombination. The chain is Recombination-associated protein RdgC from Yersinia enterocolitica serotype O:8 / biotype 1B (strain NCTC 13174 / 8081).